A 471-amino-acid chain; its full sequence is Glutamate--tRNA ligase (471 aa).

A 'HIGH' region motif is present at residues 9–19 (PSPTGYLHVGG). 4 residues coordinate Zn(2+): C98, C100, C125, and H127. The short motif at 237 to 241 (KLSKR) is the 'KMSKS' region element. Residue K240 participates in ATP binding.

It belongs to the class-I aminoacyl-tRNA synthetase family. Glutamate--tRNA ligase type 1 subfamily. Monomer. Zn(2+) serves as cofactor.

The protein resides in the cytoplasm. It carries out the reaction tRNA(Glu) + L-glutamate + ATP = L-glutamyl-tRNA(Glu) + AMP + diphosphate. Catalyzes the attachment of glutamate to tRNA(Glu) in a two-step reaction: glutamate is first activated by ATP to form Glu-AMP and then transferred to the acceptor end of tRNA(Glu). In Shigella boydii serotype 4 (strain Sb227), this protein is Glutamate--tRNA ligase.